A 737-amino-acid chain; its full sequence is Zinc finger protein 184 (737 aa).

The KRAB domain occupies 28–99; sequence VTFKDVVVNF…DSCIPVGPLE (72 aa). Residue S117 is modified to Phosphoserine. A Glycyl lysine isopeptide (Lys-Gly) (interchain with G-Cter in SUMO2) cross-link involves residue K185. 17 consecutive C2H2-type zinc fingers follow at residues 201 to 223, 229 to 251, 257 to 279, 285 to 307, 313 to 335, 341 to 363, 369 to 391, 397 to 419, 425 to 447, 453 to 475, 481 to 503, 509 to 531, 537 to 559, 565 to 587, 593 to 615, 621 to 643, and 649 to 671; these read CKCNECGKAFTYCSALIRHQRTH, YKCNECNKAFSRSENLINHQRIH, YKCDQCGKGFIEGPSLTQHQRIH, YKCDECGKAFSQRTHLVQHQRIH, YTCTECGKSFSQRGHFMEHQKIH, FKCEECEKTFTRSTHLTQHQKIH, YKCNECGKAFNGPSTFIRHHMIH, YECNECGKAFSQHSNLTQHQKTH, YDCAECGKAFSYWSSLAQHLKIH, YKCSDCGKAFSYCSSLTQHRRIH, FECSECGKAFSYLSNLNQHQKTH, YECKECGKAFIRSSSLAKHERIH, YQCHECGKTFSYGSSLIQHKKIH, YKCNECGRAFNQKIHLTQHKRIH, YACPKCGKTFRHCSSLAQHQKTH, YQCNKCEKTFSQNSRLTQHQRIH, and YKCSECDKCFTGSVHLTEHRSTH. The segment at 677–698 adopts a C2H2-type 18; degenerate zinc-finger fold; it reads YNSECPQTFSQSTYLTQHQKIH. The segment at 704–726 adopts a C2H2-type 19 zinc-finger fold; that stretch reads LGCEDCEKAFQCHSALTKHQRLH.

It belongs to the krueppel C2H2-type zinc-finger protein family.

Its subcellular location is the nucleus. Functionally, may be involved in transcriptional regulation. In Mus musculus (Mouse), this protein is Zinc finger protein 184 (Zfp184).